A 308-amino-acid chain; its full sequence is tRNA pseudouridine synthase B (308 aa).

Aspartate 44 serves as the catalytic Nucleophile.

The protein belongs to the pseudouridine synthase TruB family. Type 1 subfamily.

The enzyme catalyses uridine(55) in tRNA = pseudouridine(55) in tRNA. Functionally, responsible for synthesis of pseudouridine from uracil-55 in the psi GC loop of transfer RNAs. The polypeptide is tRNA pseudouridine synthase B (Bdellovibrio bacteriovorus (strain ATCC 15356 / DSM 50701 / NCIMB 9529 / HD100)).